A 493-amino-acid chain; its full sequence is Monocarboxylate transporter 1 (493 aa).

Residues 1–22 (MPPAIGGPVGYTPPDGGWGWAV) are Cytoplasmic-facing. A helical membrane pass occupies residues 23-44 (LVGAFISIGFSYAFPKSITVFF). A (S)-lactate-binding site is contributed by K38. At 45-55 (KEIEVIFSATT) the chain is on the extracellular side. Residues 56–80 (SEVSWISSIMLAVMYAGGPISSILV) traverse the membrane as a helical segment. Residues 81 to 84 (NKYG) lie on the Cytoplasmic side of the membrane. The chain crosses the membrane as a helical span at residues 85 to 105 (SRPVMIAGGCLSGCGLIAASF). Residues 106-109 (CNTV) are Extracellular-facing. Residues 110 to 132 (QELYLCIGVIGGLGLAFNLNPAL) traverse the membrane as a helical segment. Over 133–146 (TMIGKYFYKKRPLA) the chain is Cytoplasmic. A helical membrane pass occupies residues 147 to 169 (NGLAMAGSPVFLSTLAPLNQAFF). Residues 170–174 (DIFDW) are Extracellular-facing. The helical transmembrane segment at 175-194 (RGSFLILGGLLLNCCVAGSL) threads the bilayer. Residues 195-254 (MRPIGPEQVKLEKLKSKESLQEAGKSDANTDLIGGSPKGEKLSVFQTINKFLDLSLFTHR) lie on the Cytoplasmic side of the membrane. Phosphoserine occurs at positions 210, 213, and 220. At T224 the chain carries Phosphothreonine. S230 is subject to Phosphoserine. The helical transmembrane segment at 255–281 (GFLLYLSGNVVMFFGLFTPLVFLSSYG) threads the bilayer. The Extracellular portion of the chain corresponds to 282-288 (KSKDFSS). The helical transmembrane segment at 289 to 310 (EKSAFLLSILAFVDMVARPSMG) threads the bilayer. D302 contributes to the H(+) binding site. R306 provides a ligand contact to (S)-lactate. The Cytoplasmic portion of the chain corresponds to 311–321 (LAANTKWIRPR). Residues 322-342 (IQYFFAASVVANGVCHLLAPL) traverse the membrane as a helical segment. Residues 343–346 (STTY) are Extracellular-facing. A helical transmembrane segment spans residues 347 to 368 (VGFCVYAGVFGFAFGWLSSVLF). The Cytoplasmic segment spans residues 369-382 (ETLMDLIGPQRFSS). The helical transmembrane segment at 383–403 (AVGLVTIVECCPVLLGPPLLG) threads the bilayer. Residues 404–414 (RLNDMYGDYKY) are Extracellular-facing. Residues 415–436 (TYWACGVILIIAGIYLFIGMGI) form a helical membrane-spanning segment. At 437-493 (NYRLLAKEQKAEEKQKREGKEDEASTDVDEKPKETMKAAQSPQQHSSGDPTEEESPV) the chain is on the cytoplasmic side. The segment covering 447 to 472 (AEEKQKREGKEDEASTDVDEKPKETM) has biased composition (basic and acidic residues). Residues 447-493 (AEEKQKREGKEDEASTDVDEKPKETMKAAQSPQQHSSGDPTEEESPV) form a disordered region. S461 is subject to Phosphoserine. Phosphothreonine is present on T462. Residues 474-485 (AAQSPQQHSSGD) are compositionally biased toward polar residues. A phosphoserine mark is found at S477, S482, S483, and S491.

The protein belongs to the major facilitator superfamily. Monocarboxylate porter (TC 2.A.1.13) family. Interacts with isoform 2 of BSG; interaction mediates SLC16A1 targeting to the plasma membrane. Interacts with EMB; interaction mediates SLC16A1 targeting to the plasma membrane. As to expression, detected in liver, brain, spinal cord, spermatozoa, muscle, white adipose tissue and brown adipose tissue (at protein level). Widely expressed, except in pancreas, where expression is not detectable.

The protein resides in the cell membrane. It is found in the basolateral cell membrane. The protein localises to the apical cell membrane. It catalyses the reaction (S)-lactate(in) + H(+)(in) = (S)-lactate(out) + H(+)(out). The catalysed reaction is acetate(out) + H(+)(out) = acetate(in) + H(+)(in). The enzyme catalyses acetoacetate(out) + H(+)(out) = acetoacetate(in) + H(+)(in). It carries out the reaction pyruvate(out) + H(+)(out) = pyruvate(in) + H(+)(in). It catalyses the reaction (R)-3-hydroxybutanoate(out) + H(+)(out) = (R)-3-hydroxybutanoate(in) + H(+)(in). The catalysed reaction is 3-methyl-2-oxobutanoate(out) + H(+)(out) = 3-methyl-2-oxobutanoate(in) + H(+)(in). The enzyme catalyses 4-methyl-2-oxopentanoate(out) + H(+)(out) = 4-methyl-2-oxopentanoate(in) + H(+)(in). It carries out the reaction succinate(in) + 2 H(+)(in) = succinate(out) + 2 H(+)(out). In terms of biological role, bidirectional proton-coupled monocarboxylate transporter. Catalyzes the rapid transport across the plasma membrane of many monocarboxylates such as lactate, pyruvate, acetate and the ketone bodies acetoacetate and beta-hydroxybutyrate, and thus contributes to the maintenance of intracellular pH. The transport direction is determined by the proton motive force and the concentration gradient of the substrate monocarboxylate. MCT1 is a major lactate exporter. Plays a role in cellular responses to a high-fat diet by modulating the cellular levels of lactate and pyruvate that contribute to the regulation of central metabolic pathways and insulin secretion, with concomitant effects on plasma insulin levels and blood glucose homeostasis. Facilitates the protonated monocarboxylate form of succinate export, that its transient protonation upon muscle cell acidification in exercising muscle and ischemic heart. Functions via alternate outward- and inward-open conformation states. Protonation and deprotonation of 302-Asp is essential for the conformational transition. This is Monocarboxylate transporter 1 (Slc16a1) from Mus musculus (Mouse).